The following is a 103-amino-acid chain: Large ribosomal subunit protein bL21 (103 aa).

This sequence belongs to the bacterial ribosomal protein bL21 family. Part of the 50S ribosomal subunit. Contacts protein L20.

Its function is as follows. This protein binds to 23S rRNA in the presence of protein L20. The protein is Large ribosomal subunit protein bL21 of Methylococcus capsulatus (strain ATCC 33009 / NCIMB 11132 / Bath).